The chain runs to 285 residues: Small ribosomal subunit protein uS2 (285 aa).

Positions G231–E285 are disordered. Low complexity predominate over residues A255–E285.

This sequence belongs to the universal ribosomal protein uS2 family.

This is Small ribosomal subunit protein uS2 from Micrococcus luteus (strain ATCC 4698 / DSM 20030 / JCM 1464 / CCM 169 / CCUG 5858 / IAM 1056 / NBRC 3333 / NCIMB 9278 / NCTC 2665 / VKM Ac-2230) (Micrococcus lysodeikticus).